The chain runs to 231 residues: Large ribosomal subunit protein uL1 (231 aa).

It belongs to the universal ribosomal protein uL1 family. As to quaternary structure, part of the 50S ribosomal subunit.

Functionally, binds directly to 23S rRNA. The L1 stalk is quite mobile in the ribosome, and is involved in E site tRNA release. Protein L1 is also a translational repressor protein, it controls the translation of the L11 operon by binding to its mRNA. The chain is Large ribosomal subunit protein uL1 from Pseudomonas syringae pv. syringae (strain B728a).